The following is a 159-amino-acid chain: Cytochrome c nitrite reductase subunit NrfH (159 aa).

Residues 2 to 14 lie on the Cytoplasmic side of the membrane; that stretch reads SEEKSRNGPARLK. The chain crosses the membrane as a helical; Signal-anchor for type II membrane protein span at residues 15-33; the sequence is LVLGGATLGVVALATVAFG. Topologically, residues 34–159 are periplasmic; it reads MKYTDQRPFC…PISTREVADE (126 aa). 5 residues coordinate heme: cysteine 43, cysteine 46, methionine 49, histidine 61, and cysteine 66. Residue asparagine 67 participates in a menaquinol binding. Positions 69 and 70 each coordinate heme. A menaquinol is bound by residues lysine 82 and aspartate 89. Aspartate 89 contributes to the heme binding site. The tract at residues 99–100 is interaction with NrfA; the sequence is GD. Heme-binding residues include cysteine 116, cysteine 119, histidine 120, cysteine 136, cysteine 139, histidine 140, and histidine 145. The interaction with NrfA stretch occupies residues 123 to 158; it reads TNVEVASMEAKKYCTDCHRNVQHMRMKPISTREVAD.

The protein belongs to the NapC/NirT/NrfH family. In terms of assembly, component of the NrfHA cytochrome c nitrite reductase complex composed of 4 NrfA catalytic subunits and 2 NrfH quinone-binding subunits. Interacts with NrfA homodimer. Requires heme as cofactor.

Its subcellular location is the cell inner membrane. Functionally, electron donor subunit of the cytochrome c nitrite reductase holocomplex NrfHA. Acquires electrons from the menaquinone pool and mediates their transfer to the catalytic subunit NrfA in an anaerobic respiratory process of nitrite. The other biological function of the NrfHA holocomplex is to detoxify nitrite. This function is essential for the survival of this organism as it enables it to overcome inhibition by nitrite, which is produced by other organisms living in the same environment. The chain is Cytochrome c nitrite reductase subunit NrfH from Nitratidesulfovibrio vulgaris (strain ATCC 29579 / DSM 644 / CCUG 34227 / NCIMB 8303 / VKM B-1760 / Hildenborough) (Desulfovibrio vulgaris).